Reading from the N-terminus, the 388-residue chain is Chorismate synthase (388 aa).

Positions 39 and 45 each coordinate NADP(+). FMN contacts are provided by residues 130 to 132 (RSS), 251 to 252 (NA), Gly-296, 311 to 315 (KPIPT), and Arg-337.

Belongs to the chorismate synthase family. In terms of assembly, homotetramer. The cofactor is FMNH2.

The catalysed reaction is 5-O-(1-carboxyvinyl)-3-phosphoshikimate = chorismate + phosphate. It functions in the pathway metabolic intermediate biosynthesis; chorismate biosynthesis; chorismate from D-erythrose 4-phosphate and phosphoenolpyruvate: step 7/7. Its function is as follows. Catalyzes the anti-1,4-elimination of the C-3 phosphate and the C-6 proR hydrogen from 5-enolpyruvylshikimate-3-phosphate (EPSP) to yield chorismate, which is the branch point compound that serves as the starting substrate for the three terminal pathways of aromatic amino acid biosynthesis. This reaction introduces a second double bond into the aromatic ring system. The polypeptide is Chorismate synthase (Streptococcus agalactiae serotype V (strain ATCC BAA-611 / 2603 V/R)).